We begin with the raw amino-acid sequence, 346 residues long: DNA primase small subunit PriS (346 aa).

Residues Asp-95 and Asp-97 contribute to the active site. Zn(2+) is bound by residues Cys-106, His-108, Cys-114, and Cys-117. Positions 106–117 (CEHEPGTVCPIC) match the Zinc knuckle motif motif. Asp-280 is an active-site residue.

Belongs to the eukaryotic-type primase small subunit family. Heterodimer of a small subunit (PriS) and a large subunit (PriL). Mg(2+) serves as cofactor. Mn(2+) is required as a cofactor.

In terms of biological role, catalytic subunit of DNA primase, an RNA polymerase that catalyzes the synthesis of short RNA molecules used as primers for DNA polymerase during DNA replication. The small subunit contains the primase catalytic core and has DNA synthesis activity on its own. Binding to the large subunit stabilizes and modulates the activity, increasing the rate of DNA synthesis while decreasing the length of the DNA fragments, and conferring RNA synthesis capability. The DNA polymerase activity may enable DNA primase to also catalyze primer extension after primer synthesis. May also play a role in DNA repair. The polypeptide is DNA primase small subunit PriS (Pyrococcus horikoshii (strain ATCC 700860 / DSM 12428 / JCM 9974 / NBRC 100139 / OT-3)).